The sequence spans 263 residues: HTH-type transcriptional repressor NanR (263 aa).

The interval Met-1–Asn-21 is disordered. The region spanning Lys-30–Pro-98 is the HTH gntR-type domain. The segment at residues Glu-58–Ala-77 is a DNA-binding region (H-T-H motif).

It belongs to the NanR family.

In terms of biological role, transcriptional repressor that controls expression of the genes required for the catabolism of sialic acids. This chain is HTH-type transcriptional repressor NanR, found in Escherichia coli O7:K1 (strain IAI39 / ExPEC).